An 867-amino-acid chain; its full sequence is Probable alpha,alpha-trehalose-phosphate synthase [UDP-forming] 9 (867 aa).

S5 is modified (phosphoserine). Position 32 is a phosphothreonine (T32). The interval 59 to 546 is glycosyltransferase; that stretch reads ERKIIVANML…AKSFMQDLER (488 aa).

The protein in the N-terminal section; belongs to the glycosyltransferase 20 family. It in the C-terminal section; belongs to the trehalose phosphatase family.

The enzyme catalyses D-glucose 6-phosphate + UDP-alpha-D-glucose = alpha,alpha-trehalose 6-phosphate + UDP + H(+). The chain is Probable alpha,alpha-trehalose-phosphate synthase [UDP-forming] 9 (TPS9) from Arabidopsis thaliana (Mouse-ear cress).